Here is a 169-residue protein sequence, read N- to C-terminus: MSTVKGQTRRERPRGARPHGLTKQKRQEIKEAFDLFDTDNSGTIDAKELNVAMRALGFEMTEEQINQMIADVDKDGSGSIDYEEFEHMMTAKIGERDSKEELTKAFSIIDQDKNGKISDVDIQRIAKELGENFTYQEIQEMVQEADRNGDGEIDFDEFIRMMRRTGYGY.

Residues 1-26 (MSTVKGQTRRERPRGARPHGLTKQKR) form a disordered region. Basic residues predominate over residues 15–24 (GARPHGLTKQ). EF-hand domains lie at 24–59 (QKRQEIKEAFDLFDTDNSGTIDAKELNVAMRALGFE), 60–95 (MTEEQINQMIADVDKDGSGSIDYEEFEHMMTAKIGE), 97–132 (DSKEELTKAFSIIDQDKNGKISDVDIQRIAKELGEN), and 133–168 (FTYQEIQEMVQEADRNGDGEIDFDEFIRMMRRTGYG). Positions 37, 39, 41, 43, 48, 73, 75, 77, 79, 84, 110, 112, 114, 116, 121, 146, 148, 150, 152, and 157 each coordinate Ca(2+).

In terms of biological role, potential calcium sensor. This Oryza sativa subsp. japonica (Rice) protein is Probable calcium-binding protein CML13 (CML13).